Reading from the N-terminus, the 430-residue chain is Glutamate-1-semialdehyde 2,1-aminomutase (430 aa).

Lysine 265 is modified (N6-(pyridoxal phosphate)lysine).

This sequence belongs to the class-III pyridoxal-phosphate-dependent aminotransferase family. HemL subfamily. Homodimer. It depends on pyridoxal 5'-phosphate as a cofactor.

The protein resides in the cytoplasm. The enzyme catalyses (S)-4-amino-5-oxopentanoate = 5-aminolevulinate. It functions in the pathway porphyrin-containing compound metabolism; protoporphyrin-IX biosynthesis; 5-aminolevulinate from L-glutamyl-tRNA(Glu): step 2/2. This chain is Glutamate-1-semialdehyde 2,1-aminomutase (hemL), found in Helicobacter pylori (strain ATCC 700392 / 26695) (Campylobacter pylori).